The sequence spans 444 residues: Squalene synthase ERG9 (444 aa).

The chain crosses the membrane as a helical span at residues 421–441; the sequence is FNMVLSIILSVLLGFYYIYTL.

It belongs to the phytoene/squalene synthase family. Mg(2+) is required as a cofactor.

It localises to the endoplasmic reticulum membrane. Its subcellular location is the microsome. It catalyses the reaction 2 (2E,6E)-farnesyl diphosphate + NADPH + H(+) = squalene + 2 diphosphate + NADP(+). The enzyme catalyses 2 (2E,6E)-farnesyl diphosphate + NADH + H(+) = squalene + 2 diphosphate + NAD(+). It participates in terpene metabolism; lanosterol biosynthesis; lanosterol from farnesyl diphosphate: step 1/3. In terms of biological role, squalene synthase; part of the third module of ergosterol biosynthesis pathway that includes the late steps of the pathway. ERG9 produces squalene from 2 farnesyl pyrophosphate moieties. The third module or late pathway involves the ergosterol synthesis itself through consecutive reactions that mainly occur in the endoplasmic reticulum (ER) membrane. Firstly, the squalene synthase ERG9 catalyzes the condensation of 2 farnesyl pyrophosphate moieties to form squalene, which is the precursor of all steroids. Squalene synthase is crucial for balancing the incorporation of farnesyl diphosphate (FPP) into sterol and nonsterol isoprene synthesis. Secondly, the squalene epoxidase ERG1 catalyzes the stereospecific oxidation of squalene to (S)-2,3-epoxysqualene, which is considered to be a rate-limiting enzyme in steroid biosynthesis. Then, the lanosterol synthase ERG7 catalyzes the cyclization of (S)-2,3 oxidosqualene to lanosterol, a reaction that forms the sterol core. In the next steps, lanosterol is transformed to zymosterol through a complex process involving various demethylation, reduction and desaturation reactions. The lanosterol 14-alpha-demethylase ERG11 (also known as CYP51) catalyzes C14-demethylation of lanosterol to produce 4,4'-dimethyl cholesta-8,14,24-triene-3-beta-ol, which is critical for ergosterol biosynthesis. The C-14 reductase ERG24 reduces the C14=C15 double bond of 4,4-dimethyl-cholesta-8,14,24-trienol to produce 4,4-dimethyl-cholesta-8,24-dienol. 4,4-dimethyl-cholesta-8,24-dienol is substrate of the C-4 demethylation complex ERG25-ERG26-ERG27 in which ERG25 catalyzes the three-step monooxygenation required for the demethylation of 4,4-dimethyl and 4alpha-methylsterols, ERG26 catalyzes the oxidative decarboxylation that results in a reduction of the 3-beta-hydroxy group at the C-3 carbon to an oxo group, and ERG27 is responsible for the reduction of the keto group on the C-3. ERG28 has a role as a scaffold to help anchor ERG25, ERG26 and ERG27 to the endoplasmic reticulum and ERG29 regulates the activity of the iron-containing C4-methylsterol oxidase ERG25. Then, the sterol 24-C-methyltransferase ERG6 catalyzes the methyl transfer from S-adenosyl-methionine to the C-24 of zymosterol to form fecosterol. The C-8 sterol isomerase ERG2 catalyzes the reaction which results in unsaturation at C-7 in the B ring of sterols and thus converts fecosterol to episterol. The sterol-C5-desaturase ERG3 then catalyzes the introduction of a C-5 double bond in the B ring to produce 5-dehydroepisterol. The C-22 sterol desaturase ERG5 further converts 5-dehydroepisterol into ergosta-5,7,22,24(28)-tetraen-3beta-ol by forming the C-22(23) double bond in the sterol side chain. Finally, ergosta-5,7,22,24(28)-tetraen-3beta-ol is substrate of the C-24(28) sterol reductase ERG4 to produce ergosterol. This chain is Squalene synthase ERG9, found in Saccharomyces cerevisiae (strain ATCC 204508 / S288c) (Baker's yeast).